The primary structure comprises 370 residues: Aminomethyltransferase (370 aa).

Belongs to the GcvT family. The glycine cleavage system is composed of four proteins: P, T, L and H.

The enzyme catalyses N(6)-[(R)-S(8)-aminomethyldihydrolipoyl]-L-lysyl-[protein] + (6S)-5,6,7,8-tetrahydrofolate = N(6)-[(R)-dihydrolipoyl]-L-lysyl-[protein] + (6R)-5,10-methylene-5,6,7,8-tetrahydrofolate + NH4(+). Its function is as follows. The glycine cleavage system catalyzes the degradation of glycine. The chain is Aminomethyltransferase from Prochlorococcus marinus (strain MIT 9301).